A 565-amino-acid chain; its full sequence is Adenine deaminase (565 aa).

The protein belongs to the metallo-dependent hydrolases superfamily. Adenine deaminase family. It depends on Mn(2+) as a cofactor.

The catalysed reaction is adenine + H2O + H(+) = hypoxanthine + NH4(+). The sequence is that of Adenine deaminase from Cereibacter sphaeroides (strain ATCC 17023 / DSM 158 / JCM 6121 / CCUG 31486 / LMG 2827 / NBRC 12203 / NCIMB 8253 / ATH 2.4.1.) (Rhodobacter sphaeroides).